The sequence spans 54 residues: Sperm protamine P3 (54 aa).

The interval 1–54 (RRRRRRGKGKGGKKKKGKKRRRRGRKGKGKGKKKGKRKGKRGGKRRRRRRKGKK) is disordered.

As to expression, gonads.

The protein resides in the nucleus. It localises to the chromosome. Functionally, protamines substitute for histones in the chromatin of sperm during the haploid phase of spermatogenesis. They compact sperm DNA into a highly condensed, stable and inactive complex. The polypeptide is Sperm protamine P3 (Bolinus brandaris (Purple dye murex)).